The following is a 320-amino-acid chain: Cytochrome f (320 aa).

Residues 1 to 35 (MQTRKTFSWIKEQIARSISVSLLIYIITRTSISSA) form the signal peptide. Heme contacts are provided by Tyr36, Cys56, Cys59, and His60. The helical transmembrane segment at 286–306 (VQGLLFFLASVILAQIFLVLK) threads the bilayer.

This sequence belongs to the cytochrome f family. In terms of assembly, the 4 large subunits of the cytochrome b6-f complex are cytochrome b6, subunit IV (17 kDa polypeptide, petD), cytochrome f and the Rieske protein, while the 4 small subunits are PetG, PetL, PetM and PetN. The complex functions as a dimer. Requires heme as cofactor.

Its subcellular location is the plastid. It localises to the chloroplast thylakoid membrane. In terms of biological role, component of the cytochrome b6-f complex, which mediates electron transfer between photosystem II (PSII) and photosystem I (PSI), cyclic electron flow around PSI, and state transitions. The sequence is that of Cytochrome f from Jasminum nudiflorum (Winter jasmine).